A 283-amino-acid chain; its full sequence is Orotidine 5'-phosphate decarboxylase (283 aa).

Substrate contacts are provided by residues Asp40, 62-64 (KTH), 93-102 (DRKFADIGNT), Tyr220, and Arg239. Lys95 serves as the catalytic Proton donor.

This sequence belongs to the OMP decarboxylase family.

The catalysed reaction is orotidine 5'-phosphate + H(+) = UMP + CO2. The protein operates within pyrimidine metabolism; UMP biosynthesis via de novo pathway; UMP from orotate: step 2/2. This chain is Orotidine 5'-phosphate decarboxylase (PYR6), found in Mycosarcoma maydis (Corn smut fungus).